Here is a 203-residue protein sequence, read N- to C-terminus: Imidazole glycerol phosphate synthase subunit HisH (203 aa).

The Glutamine amidotransferase type-1 domain maps to 1–203 (MIGIIDYGMG…KNFGEMIKCL (203 aa)). The Nucleophile role is filled by Cys-79. Active-site residues include His-181 and Glu-183.

As to quaternary structure, heterodimer of HisH and HisF.

The protein resides in the cytoplasm. It carries out the reaction 5-[(5-phospho-1-deoxy-D-ribulos-1-ylimino)methylamino]-1-(5-phospho-beta-D-ribosyl)imidazole-4-carboxamide + L-glutamine = D-erythro-1-(imidazol-4-yl)glycerol 3-phosphate + 5-amino-1-(5-phospho-beta-D-ribosyl)imidazole-4-carboxamide + L-glutamate + H(+). It catalyses the reaction L-glutamine + H2O = L-glutamate + NH4(+). Its pathway is amino-acid biosynthesis; L-histidine biosynthesis; L-histidine from 5-phospho-alpha-D-ribose 1-diphosphate: step 5/9. IGPS catalyzes the conversion of PRFAR and glutamine to IGP, AICAR and glutamate. The HisH subunit catalyzes the hydrolysis of glutamine to glutamate and ammonia as part of the synthesis of IGP and AICAR. The resulting ammonia molecule is channeled to the active site of HisF. This is Imidazole glycerol phosphate synthase subunit HisH from Caldanaerobacter subterraneus subsp. tengcongensis (strain DSM 15242 / JCM 11007 / NBRC 100824 / MB4) (Thermoanaerobacter tengcongensis).